The sequence spans 754 residues: MHINQLLQHANSDLPLLQANFGLERESLRINKTNHRLAQTPHPTALGSRQFHPYIQTDYSESQMELITPVAHSSKEVLRFLGAITDVAERSIDQNQYLWPLSMPPQITEDEIEIAQLEDDFEFSYRQYLDKKYGKILQSISGIHYNMELGADLMNELFELSGYQSFIDFKNDLYLKVAQNFLNYRWFLTYLYGASPLAEKGFLNEELSQTVRSIRNSHLGYVNTDDIKVPFDSLENYISSIEHYVKSGALSAEKEFYSAVRLRGSKHNRDYLTKGITYLEFRCFDLNPFNNRGITQETIDSVHLFILAMLWLDTPKKLNQALDKAQKLNDKIALSHPLEKLPKENSASLIIEAMEALIKHFKLPSYYDDLLIAIKKQVENPKLTLSGRLFEHIKHASLEHFGQKKGQDYHNYAWQNYYALKGYENMELSTQMLLFDTIQKGIHFEILDENDQFLKLWHNDHIEYVKNGNMTSKDNYVIPLAMANKVVTKKILRENGYPVPAGAEFDNKDEALRYYSQIKNKPIVVKPKTTNFGLGISIFETAASHNDYEKALDIAFIEDYSVLVEEFIPGTEYRFFILDGKCEAVLLRVAANVVGDGHSTVRQLVAQKNRDPLRGREHRSPLEIIDLGDIELLMLQQEGYTLEDILPKGKKVNLRGNSNISTGGDSIDVTETMDPSYKQLAANMATAMGAWVCGVDLIIPDTNLKASKGKPNCTCIELNFNPSMYMHTYCYQGPGQVITGKILAKLFPEISTKI.

The segment at 1–333 (MHINQLLQHA…KAQKLNDKIA (333 aa)) is glutamate--cysteine ligase. The ATP-grasp domain maps to 489–752 (KKILRENGYP…LAKLFPEIST (264 aa)). 516–574 (SQIKNKPIVVKPKTTNFGLGISIFETAASHNDYEKALDIAFIEDYSVLVEEFIPGTEYR) contacts ATP. Positions 696, 717, and 719 each coordinate Mg(2+). Residues D696, E717, and N719 each contribute to the Mn(2+) site.

It in the N-terminal section; belongs to the glutamate--cysteine ligase type 1 family. Type 2 subfamily. As to quaternary structure, monomer. Mg(2+) is required as a cofactor. The cofactor is Mn(2+).

It carries out the reaction L-cysteine + L-glutamate + ATP = gamma-L-glutamyl-L-cysteine + ADP + phosphate + H(+). The catalysed reaction is gamma-L-glutamyl-L-cysteine + glycine + ATP = glutathione + ADP + phosphate + H(+). The protein operates within sulfur metabolism; glutathione biosynthesis; glutathione from L-cysteine and L-glutamate: step 1/2. It functions in the pathway sulfur metabolism; glutathione biosynthesis; glutathione from L-cysteine and L-glutamate: step 2/2. Functionally, synthesizes glutathione from L-glutamate and L-cysteine via gamma-L-glutamyl-L-cysteine. In Streptococcus mutans serotype c (strain ATCC 700610 / UA159), this protein is Glutathione biosynthesis bifunctional protein GshAB.